Here is a 285-residue protein sequence, read N- to C-terminus: uncharacterized protein (285 aa).

Ser-168 provides a ligand contact to substrate. Residue Tyr-181 is the Proton acceptor of the active site.

It belongs to the short-chain dehydrogenases/reductases (SDR) family.

This is an uncharacterized protein from Haemophilus influenzae (strain ATCC 51907 / DSM 11121 / KW20 / Rd).